A 444-amino-acid polypeptide reads, in one-letter code: Homogentisate 1,2-dioxygenase (444 aa).

Catalysis depends on H298, which acts as the Proton acceptor. The Fe cation site is built by H341 and E347. Homogentisate contacts are provided by Y356 and H377. Residue H377 participates in Fe cation binding.

Belongs to the homogentisate dioxygenase family. Hexamer; dimer of trimers. Requires Fe cation as cofactor.

It carries out the reaction homogentisate + O2 = 4-maleylacetoacetate + H(+). The protein operates within amino-acid degradation; L-phenylalanine degradation; acetoacetate and fumarate from L-phenylalanine: step 4/6. Functionally, involved in the catabolism of homogentisate (2,5-dihydroxyphenylacetate or 2,5-OH-PhAc), a central intermediate in the degradation of phenylalanine and tyrosine. Catalyzes the oxidative ring cleavage of the aromatic ring of homogentisate to yield maleylacetoacetate. The chain is Homogentisate 1,2-dioxygenase from Burkholderia lata (strain ATCC 17760 / DSM 23089 / LMG 22485 / NCIMB 9086 / R18194 / 383).